The chain runs to 734 residues: Photosystem I P700 chlorophyll a apoprotein A2 (734 aa).

8 helical membrane-spanning segments follow: residues 46–69, 135–158, 175–199, 273–291, 330–353, 369–395, 417–439, and 517–535; these read IFSSHFGHIAIIFLWTSGNLFHVA, LYNGSLFLLILSAIMLFAGWLHLQ, LNHHLSGLFGLSSLAWTGHLIHVAI, MAHHHLAIAIVFIIAGHMY, LHMQLGLALASLGVITSLVAQHMY, AALYTHHQYIAGFLMVGAFAHGAIFFI, AIISHLSWVSLFLGFHTLGLYIH, and FLVHHAIALGLHTTTLILV. [4Fe-4S] cluster-binding residues include Cys559 and Cys568. Transmembrane regions (helical) follow at residues 575 to 596 and 643 to 665; these read AFYLSVFWMLNTIGWVTFYWHW and LSVWAWMFLFGHLVWATGFMFLI. Positions 654, 662, and 670 each coordinate chlorophyll a. A phylloquinone-binding site is contributed by Trp671. A helical transmembrane segment spans residues 707–727; it reads LVGLVHFSVGYILTYAAFVIA.

Belongs to the PsaA/PsaB family. The PsaA/B heterodimer binds the P700 chlorophyll special pair and subsequent electron acceptors. PSI consists of a core antenna complex that captures photons, and an electron transfer chain that converts photonic excitation into a charge separation. The eukaryotic PSI reaction center is composed of at least 11 subunits. P700 is a chlorophyll a/chlorophyll a' dimer, A0 is one or more chlorophyll a, A1 is one or both phylloquinones and FX is a shared 4Fe-4S iron-sulfur center. serves as cofactor.

The protein resides in the plastid. The protein localises to the chloroplast thylakoid membrane. The enzyme catalyses reduced [plastocyanin] + hnu + oxidized [2Fe-2S]-[ferredoxin] = oxidized [plastocyanin] + reduced [2Fe-2S]-[ferredoxin]. In terms of biological role, psaA and PsaB bind P700, the primary electron donor of photosystem I (PSI), as well as the electron acceptors A0, A1 and FX. PSI is a plastocyanin/cytochrome c6-ferredoxin oxidoreductase, converting photonic excitation into a charge separation, which transfers an electron from the donor P700 chlorophyll pair to the spectroscopically characterized acceptors A0, A1, FX, FA and FB in turn. Oxidized P700 is reduced on the lumenal side of the thylakoid membrane by plastocyanin or cytochrome c6. The sequence is that of Photosystem I P700 chlorophyll a apoprotein A2 from Gracilaria tenuistipitata var. liui (Red alga).